Here is a 705-residue protein sequence, read N- to C-terminus: Structure-specific endonuclease subunit SLX1 homolog (705 aa).

One can recognise a GIY-YIG domain in the interval 4–90; that stretch reads RFHCVYLLTS…TASARLRHAI (87 aa). Disordered regions lie at residues 155 to 192 and 290 to 323; these read RASSPRVGTQQHSQRSSSLQGQADGVATPPLPALDSKG and ASFASDSDDEDTRRFAPYCPSTGSRTPSPQRVHT. Polar residues-rich tracts occupy residues 160–175 and 310–320; these read RVGTQQHSQRSSSLQG and STGSRTPSPQR. The SLX1-type zinc-finger motif lies at 446–526; sequence CSLCTLPLQP…PSQPCPCPLC (81 aa). Residues 595–604 are compositionally biased toward low complexity; it reads KGAGEAPGAA. A disordered region spans residues 595-628; sequence KGAGEAPGAASTVRASTMHVGPARRDAPRVSSPS.

The protein belongs to the SLX1 family. In terms of assembly, forms a heterodimer with a member of the SLX4 family. A divalent metal cation is required as a cofactor.

Its subcellular location is the nucleus. Its function is as follows. Catalytic subunit of a heterodimeric structure-specific endonuclease that resolves DNA secondary structures generated during DNA repair and recombination. Has endonuclease activity towards branched DNA substrates, introducing single-strand cuts in duplex DNA close to junctions with ss-DNA. This Leishmania infantum protein is Structure-specific endonuclease subunit SLX1 homolog.